Consider the following 452-residue polypeptide: Pup--protein ligase (452 aa).

Residue glutamate 9 participates in Mg(2+) binding. Arginine 53 contributes to the ATP binding site. Tyrosine 55 is a binding site for Mg(2+). Aspartate 57 (proton acceptor) is an active-site residue. Glutamate 63 is a Mg(2+) binding site. Residues threonine 66 and tryptophan 419 each contribute to the ATP site.

The protein belongs to the Pup ligase/Pup deamidase family. Pup-conjugating enzyme subfamily. Post-translationally, pupylated at an undetermined lysine residue by the prokaryotic ubiquitin-like protein Pup, which leads to its degradation by the proteasome and thereby constitutes a negative auto-regulation.

The catalysed reaction is ATP + [prokaryotic ubiquitin-like protein]-L-glutamate + [protein]-L-lysine = ADP + phosphate + N(6)-([prokaryotic ubiquitin-like protein]-gamma-L-glutamyl)-[protein]-L-lysine.. It functions in the pathway protein degradation; proteasomal Pup-dependent pathway. The protein operates within protein modification; protein pupylation. Catalyzes the covalent attachment of the prokaryotic ubiquitin-like protein modifier Pup to the proteasomal substrate proteins, thereby targeting them for proteasomal degradation. This tagging system is termed pupylation. The ligation reaction likely involves the side-chain carboxylate of the C-terminal glutamate of Pup and the side-chain amino group of a substrate lysine. This is Pup--protein ligase (pafA) from Mycolicibacterium smegmatis (strain ATCC 700084 / mc(2)155) (Mycobacterium smegmatis).